The sequence spans 1634 residues: Protein TIC 214 (1634 aa).

Transmembrane regions (helical) follow at residues 25–45, 53–73, 94–116, 133–153, and 172–192; these read FIIGQFIRFISIYYAPLYVAL, ILALPYLLIHLFWNTDKSFFA, HFILQLLNSCILPNSTLARLITI, FAWFIGQIFMLNSFELVLVWI, and IFVILFNCLFGSLLFILSIQC. 2 disordered regions span residues 216-242 and 1365-1395; these read RERLQSEEERDVEKKKPDYKLPDSESE and QQKSETDSETDSQQKNIAETQKYLEEDSTKS. Residues 1386 to 1395 show a composition bias toward basic and acidic residues; it reads KYLEEDSTKS.

This sequence belongs to the TIC214 family. As to quaternary structure, part of the Tic complex.

The protein localises to the plastid. It localises to the chloroplast inner membrane. In terms of biological role, involved in protein precursor import into chloroplasts. May be part of an intermediate translocation complex acting as a protein-conducting channel at the inner envelope. In Cuscuta exaltata (Tall dodder), this protein is Protein TIC 214.